Here is a 294-residue protein sequence, read N- to C-terminus: uncharacterized protein (294 aa).

It belongs to the glycosyltransferase 2 family.

This is an uncharacterized protein from Haemophilus influenzae (strain ATCC 51907 / DSM 11121 / KW20 / Rd).